The chain runs to 121 residues: Small ribosomal subunit protein uS13 (121 aa).

Residues 92 to 121 (RRGLPVRGQKTKNNSRTRKGPRKTMANKKK) are disordered.

It belongs to the universal ribosomal protein uS13 family. In terms of assembly, part of the 30S ribosomal subunit. Forms a loose heterodimer with protein S19. Forms two bridges to the 50S subunit in the 70S ribosome.

Functionally, located at the top of the head of the 30S subunit, it contacts several helices of the 16S rRNA. In the 70S ribosome it contacts the 23S rRNA (bridge B1a) and protein L5 of the 50S subunit (bridge B1b), connecting the 2 subunits; these bridges are implicated in subunit movement. Contacts the tRNAs in the A and P-sites. This is Small ribosomal subunit protein uS13 from Oceanobacillus iheyensis (strain DSM 14371 / CIP 107618 / JCM 11309 / KCTC 3954 / HTE831).